We begin with the raw amino-acid sequence, 74 residues long: ATP synthase subunit c (74 aa).

The next 2 helical transmembrane spans lie at 8–28 and 52–72; these read FIGI…VSNI and IGAG…MLLI.

This sequence belongs to the ATPase C chain family. As to quaternary structure, F-type ATPases have 2 components, F(1) - the catalytic core - and F(0) - the membrane proton channel. F(1) has five subunits: alpha(3), beta(3), gamma(1), delta(1), epsilon(1). F(0) has three main subunits: a(1), b(2) and c(10-14). The alpha and beta chains form an alternating ring which encloses part of the gamma chain. F(1) is attached to F(0) by a central stalk formed by the gamma and epsilon chains, while a peripheral stalk is formed by the delta and b chains.

It is found in the cell inner membrane. In terms of biological role, f(1)F(0) ATP synthase produces ATP from ADP in the presence of a proton or sodium gradient. F-type ATPases consist of two structural domains, F(1) containing the extramembraneous catalytic core and F(0) containing the membrane proton channel, linked together by a central stalk and a peripheral stalk. During catalysis, ATP synthesis in the catalytic domain of F(1) is coupled via a rotary mechanism of the central stalk subunits to proton translocation. Key component of the F(0) channel; it plays a direct role in translocation across the membrane. A homomeric c-ring of between 10-14 subunits forms the central stalk rotor element with the F(1) delta and epsilon subunits. This Rickettsia prowazekii (strain Madrid E) protein is ATP synthase subunit c.